Consider the following 525-residue polypeptide: Lymphocyte activation gene 3 protein (525 aa).

An N-terminal signal peptide occupies residues 1–23 (MRQDLFLDLLLLQLLWEAPVVSS). Residues 24–442 (GPGKELSVVW…ISGDLKGGHL (419 aa)) lie on the Extracellular side of the membrane. Residues 37 to 163 (GAPVHLPCSL…FSCSLRLRVG (127 aa)) form the Ig-like V-type domain. The segment at 37–246 (GAPVHLPCSL…LTYRDGFNVS (210 aa)) is interaction with FGL1. A disulfide bridge links Cys44 with Cys156. Ig-like C2-type domains are found at residues 164 to 246 (QASM…FNVS), 258 to 341 (PVAP…AAVT), and 345 to 412 (ITVT…EGQK). Residue Asn184 is glycosylated (N-linked (GlcNAc...) asparagine). Cys185 and Cys235 are joined by a disulfide. 2 N-linked (GlcNAc...) asparagine glycosylation sites follow: Asn244 and Asn309. 2 disulfide bridges follow: Cys276–Cys327 and Cys363–Cys405. Positions 422 to 442 (ESSSGAWSAKRISGDLKGGHL) are connecting peptide. The helical transmembrane segment at 443–463 (FLSLILGALALFLLVTGAFGF) threads the bilayer. Residues 464–525 (HLWRRQLLRR…PELEPESRQL (62 aa)) are Cytoplasmic-facing. A disordered region spans residues 486-525 (PVQSKIEELEREPETEMEPETEPDPEPQPEPELEPESRQL). A KIEELE motif motif is present at residues 490–495 (KIEELE). Basic and acidic residues predominate over residues 490-499 (KIEELEREPE). The 15 X 2 AA tandem repeats of E-X stretch occupies residues 493–522 (ELEREPETEMEPETEPDPEPQPEPELEPES). Residues 500–519 (TEMEPETEPDPEPQPEPELE) are compositionally biased toward acidic residues.

It belongs to the LAG3 family. In terms of assembly, interacts with MHC class II (MHC-II); selectively recognizes stable complexes of peptide and MHC-II. Interacts with FGL1 (via the Fibrinogen C-terminal domain). Proteolytically cleaved by ADAM10 and ADAM17 within the connecting peptide region, leading to release of Secreted lymphocyte activation gene 3 protein (sLAG-3). ADAM10 mediates constitutive cleavage, but cleavage increases following T-cell activation, whereas shedding by ADAM17 is induced by TCR signaling in a PRKCQ-dependent manner.

It localises to the cell membrane. Its subcellular location is the secreted. In terms of biological role, lymphocyte activation gene 3 protein: Inhibitory receptor on antigen activated T-cells. Delivers inhibitory signals upon binding to ligands, such as FGL1. FGL1 constitutes a major ligand of LAG3 and is responsible for LAG3 T-cell inhibitory function. Following TCR engagement, LAG3 associates with CD3-TCR in the immunological synapse and directly inhibits T-cell activation. May inhibit antigen-specific T-cell activation in synergy with PDCD1/PD-1, possibly by acting as a coreceptor for PDCD1/PD-1. Negatively regulates the proliferation, activation, effector function and homeostasis of both CD8(+) and CD4(+) T-cells. Also mediates immune tolerance: constitutively expressed on a subset of regulatory T-cells (Tregs) and contributes to their suppressive function. Also acts as a negative regulator of plasmacytoid dendritic cell (pDCs) activation. Binds MHC class II (MHC-II); the precise role of MHC-II-binding is however unclear. Its function is as follows. May function as a ligand for MHC class II (MHC-II) on antigen-presenting cells (APC), promoting APC activation/maturation and driving Th1 immune response. The polypeptide is Lymphocyte activation gene 3 protein (Lag3) (Rattus norvegicus (Rat)).